Reading from the N-terminus, the 984-residue chain is Translation initiation factor IF-2 (984 aa).

The interval 32–402 (PAKNATSTLT…TQPQRAAKRK (371 aa)) is disordered. The span at 89–123 (PAETEAQASPAQPEAKAAAPAAEAEEAPAAKPAPA) shows a compositional bias: low complexity. Residues 126–136 (RKAEARTEAPR) show a composition bias toward basic and acidic residues. Composition is skewed to low complexity over residues 154 to 172 (APET…SAAP) and 187 to 197 (AETTESAPAEP). Positions 198–220 (AAEKAPAEKRRYEVSMEPEKDSV) are enriched in basic and acidic residues. Low complexity predominate over residues 255–270 (RPDPAAVQAQAAAAAQ). The segment covering 271–283 (AREERAERPDRGP) has biased composition (basic and acidic residues). Low complexity predominate over residues 308 to 334 (GRPAPRSGAPRPGGARPAAGFGQPAQA). Positions 482-651 (PRPPVVTIMG…ALQAEVLELK (170 aa)) constitute a tr-type G domain. The tract at residues 491–498 (GHVDHGKT) is G1. A GTP-binding site is contributed by 491–498 (GHVDHGKT). The interval 516–520 (GITQH) is G2. The G3 stretch occupies residues 537–540 (DTPG). GTP is bound by residues 537–541 (DTPGH) and 591–594 (NKID). Residues 591 to 594 (NKID) form a G4 region. A G5 region spans residues 627 to 629 (SAK).

The protein belongs to the TRAFAC class translation factor GTPase superfamily. Classic translation factor GTPase family. IF-2 subfamily.

The protein resides in the cytoplasm. One of the essential components for the initiation of protein synthesis. Protects formylmethionyl-tRNA from spontaneous hydrolysis and promotes its binding to the 30S ribosomal subunits. Also involved in the hydrolysis of GTP during the formation of the 70S ribosomal complex. The sequence is that of Translation initiation factor IF-2 from Oleidesulfovibrio alaskensis (strain ATCC BAA-1058 / DSM 17464 / G20) (Desulfovibrio alaskensis).